A 263-amino-acid polypeptide reads, in one-letter code: Adaptin ear-binding coat-associated protein 2 (263 aa).

Disordered regions lie at residues 166-194 and 219-263; these read KKKE…PPGG and APSS…WVQF. Ser181 carries the phosphoserine modification. 2 short sequence motifs (WXXF motif) span residues 240–243 and 260–263; these read WGDF and WVQF. The segment covering 246–263 has biased composition (low complexity); the sequence is STGSTSSQTQPGTGWVQF.

This sequence belongs to the NECAP family. As to quaternary structure, interacts with AP1G1 and AP2A1 components of the adapter protein complexes AP-1 and AP-2. Interacts with the GAE domain proteins GGA1, GGA2 and GGA3.

The protein resides in the cytoplasmic vesicle. It is found in the clathrin-coated vesicle membrane. It localises to the cell membrane. Involved in endocytosis. The chain is Adaptin ear-binding coat-associated protein 2 (NECAP2) from Homo sapiens (Human).